A 431-amino-acid polypeptide reads, in one-letter code: Levansucrase Lscbeta (431 aa).

Sucrose contacts are provided by Trp-61, Asp-62, Ala-148, Arg-218, and Asp-219. The active-site Nucleophile is the Asp-62. The Proton donor/acceptor role is filled by Glu-303.

Belongs to the glycosyl hydrolase 68 family. Homodimer.

The enzyme catalyses [6)-beta-D-fructofuranosyl-(2-&gt;](n) alpha-D-glucopyranoside + sucrose = [6)-beta-D-fructofuranosyl-(2-&gt;](n+1) alpha-D-glucopyranoside + D-glucose. Its activity is regulated as follows. Sucrose hydrolase activity is negatively affected by salt concentration. The levan polymerization rate is constant regardless of sucrose concentration. Functionally, catalyzes the synthesis of levan, a fructose polymer, by transferring the fructosyl moiety from sucrose to a growing acceptor molecule. Also displays sucrose hydrolase activity. This Pseudomonas syringae pv. actinidiae protein is Levansucrase Lscbeta.